A 190-amino-acid chain; its full sequence is MKRFMQIWKPAVIGFLLLTLVCGVLYPGVVTVFAGVAFHDKANGSIIEEKLADGTTGKVGSAEIGQTFTEPEYLIGRAASDGVATNLNPTSEEQKQLVEKRIAWWHKLDPTNNRVIPMDLVTASASGVDPDISEAAAAYQVDRISRERGISTKEVKEIIAEHTSNRLLGFWGEPTVNVLQVNLALDRLKM.

Residues 13 to 33 form a helical membrane-spanning segment; the sequence is IGFLLLTLVCGVLYPGVVTVF.

This sequence belongs to the KdpC family. As to quaternary structure, the system is composed of three essential subunits: KdpA, KdpB and KdpC.

The protein resides in the cell membrane. Its function is as follows. Part of the high-affinity ATP-driven potassium transport (or Kdp) system, which catalyzes the hydrolysis of ATP coupled with the electrogenic transport of potassium into the cytoplasm. This subunit acts as a catalytic chaperone that increases the ATP-binding affinity of the ATP-hydrolyzing subunit KdpB by the formation of a transient KdpB/KdpC/ATP ternary complex. The protein is Potassium-transporting ATPase KdpC subunit of Listeria monocytogenes serovar 1/2a (strain ATCC BAA-679 / EGD-e).